A 222-amino-acid chain; its full sequence is Protein GrpE (222 aa).

This sequence belongs to the GrpE family. As to quaternary structure, homodimer.

The protein localises to the cytoplasm. Functionally, participates actively in the response to hyperosmotic and heat shock by preventing the aggregation of stress-denatured proteins, in association with DnaK and GrpE. It is the nucleotide exchange factor for DnaK and may function as a thermosensor. Unfolded proteins bind initially to DnaJ; upon interaction with the DnaJ-bound protein, DnaK hydrolyzes its bound ATP, resulting in the formation of a stable complex. GrpE releases ADP from DnaK; ATP binding to DnaK triggers the release of the substrate protein, thus completing the reaction cycle. Several rounds of ATP-dependent interactions between DnaJ, DnaK and GrpE are required for fully efficient folding. The chain is Protein GrpE from Bartonella bacilliformis (strain ATCC 35685 / KC583 / Herrer 020/F12,63).